Consider the following 407-residue polypeptide: Na(+)-translocating NADH-quinone reductase subunit F (407 aa).

Residues 3–23 form a helical membrane-spanning segment; that stretch reads IILGVVMFTLIVLALVLVILF. A 2Fe-2S ferredoxin-type domain is found at 32–126; it reads GDITISVNDD…DMDIELPEEI (95 aa). Cys-69, Cys-75, Cys-78, and Cys-110 together coordinate [2Fe-2S] cluster. Positions 129–269 constitute an FAD-binding FR-type domain; sequence VKKWECTVIS…SGPFGEFFAK (141 aa). The tract at residues 272 to 389 is catalytic; the sequence is DAEMVFVGGG…PMMNAAVIGM (118 aa).

The protein belongs to the NqrF family. As to quaternary structure, composed of six subunits; NqrA, NqrB, NqrC, NqrD, NqrE and NqrF. Requires [2Fe-2S] cluster as cofactor. FAD is required as a cofactor.

The protein localises to the cell inner membrane. The enzyme catalyses a ubiquinone + n Na(+)(in) + NADH + H(+) = a ubiquinol + n Na(+)(out) + NAD(+). Its function is as follows. NQR complex catalyzes the reduction of ubiquinone-1 to ubiquinol by two successive reactions, coupled with the transport of Na(+) ions from the cytoplasm to the periplasm. The first step is catalyzed by NqrF, which accepts electrons from NADH and reduces ubiquinone-1 to ubisemiquinone by a one-electron transfer pathway. The sequence is that of Na(+)-translocating NADH-quinone reductase subunit F from Vibrio campbellii (strain ATCC BAA-1116).